A 304-amino-acid polypeptide reads, in one-letter code: Rhomboid-like protein 19 (304 aa).

6 helical membrane-spanning segments follow: residues 23 to 43 (LVVG…LALI), 58 to 78 (GYFE…LFMG), 93 to 113 (FIFV…IALY), 120 to 140 (VYLY…LVGI), 158 to 175 (WLPS…FFTL), and 179 to 198 (AYLP…LRYL). The tract at residues 247–304 (SEDHDYSTSGAPLPGSDSAEASRRRERGARALEERLGTERLVPARNKDELQSDGLDNV) is disordered. The span at 266 to 284 (EASRRRERGARALEERLGT) shows a compositional bias: basic and acidic residues.

Belongs to the peptidase S54 family.

Its subcellular location is the membrane. Probable rhomboid-type serine protease that catalyzes intramembrane proteolysis. This is Rhomboid-like protein 19 from Arabidopsis thaliana (Mouse-ear cress).